The chain runs to 214 residues: Histidine biosynthesis bifunctional protein HisIE (214 aa).

Residues 1 to 125 (MPATALSLPL…ESIEPPPADT (125 aa)) are phosphoribosyl-AMP cyclohydrolase. Positions 126–214 (LSQVYNIVCQ…VYEQLQLRRR (89 aa)) are phosphoribosyl-ATP pyrophosphohydrolase.

The protein in the N-terminal section; belongs to the PRA-CH family. It in the C-terminal section; belongs to the PRA-PH family.

It localises to the cytoplasm. It carries out the reaction 1-(5-phospho-beta-D-ribosyl)-ATP + H2O = 1-(5-phospho-beta-D-ribosyl)-5'-AMP + diphosphate + H(+). The enzyme catalyses 1-(5-phospho-beta-D-ribosyl)-5'-AMP + H2O = 1-(5-phospho-beta-D-ribosyl)-5-[(5-phospho-beta-D-ribosylamino)methylideneamino]imidazole-4-carboxamide. Its pathway is amino-acid biosynthesis; L-histidine biosynthesis; L-histidine from 5-phospho-alpha-D-ribose 1-diphosphate: step 2/9. It functions in the pathway amino-acid biosynthesis; L-histidine biosynthesis; L-histidine from 5-phospho-alpha-D-ribose 1-diphosphate: step 3/9. The protein is Histidine biosynthesis bifunctional protein HisIE of Thermosynechococcus vestitus (strain NIES-2133 / IAM M-273 / BP-1).